Reading from the N-terminus, the 126-residue chain is Copper resistance protein C (126 aa).

The N-terminal stretch at 1 to 24 (MLLNRTSFVTLFAAGMLVSALAQA) is a signal peptide. A Cu(2+)-binding site is contributed by His25. Residues Met64, Met67, Met70, His72, and Met75 each contribute to the Cu(+) site. A Cu(2+)-binding site is contributed by His115.

The protein belongs to the CopC family. In terms of assembly, monomer.

The protein resides in the periplasm. With respect to regulation, the redox state of copper bound to CopC may act as a switch between the possible trafficking pathways of the metal ion. Its function is as follows. Copper-binding protein involved in copper resistance and homeostasis. Probably mediates copper resistance by sequestering the excess of copper in the periplasm. May act as a copper carrier in the oxidizing periplasmic space that exchanges either Cu(I) or Cu(II) with its putative partners CopA, CopB and CopD. The sequence is that of Copper resistance protein C from Pseudomonas syringae pv. tomato.